A 473-amino-acid chain; its full sequence is Photosystem II CP43 reaction center protein (473 aa).

A propeptide spanning residues 1–14 is cleaved from the precursor; it reads MKILYSLRRFYHVE. N-acetylthreonine is present on Thr-15. Thr-15 is subject to Phosphothreonine. 5 helical membrane-spanning segments follow: residues 69–93, 134–155, 178–200, 255–275, and 291–312; these read LFEVAHFVPEKPMYEQGLILLPHLA, LLGPETLEESFPFFGYVWKDRN, KALYFGGVYDTWAPGGGDVRKIT, KPFAWARRAFVWSGEAYLSYS, and WFNNTAYSSEFYGPTGPEASQA. Glu-367 serves as a coordination point for [CaMn4O5] cluster. The chain crosses the membrane as a helical span at residues 447–471; that stretch reads RARAAAAGFEKGIDRDLEPVLYMNP.

This sequence belongs to the PsbB/PsbC family. PsbC subfamily. As to quaternary structure, PSII is composed of 1 copy each of membrane proteins PsbA, PsbB, PsbC, PsbD, PsbE, PsbF, PsbH, PsbI, PsbJ, PsbK, PsbL, PsbM, PsbT, PsbX, PsbY, PsbZ, Psb30/Ycf12, at least 3 peripheral proteins of the oxygen-evolving complex and a large number of cofactors. It forms dimeric complexes. Binds multiple chlorophylls and provides some of the ligands for the Ca-4Mn-5O cluster of the oxygen-evolving complex. It may also provide a ligand for a Cl- that is required for oxygen evolution. PSII binds additional chlorophylls, carotenoids and specific lipids. serves as cofactor. In terms of processing, phosphorylated on threonine residue(s); phosphorylation increases with increasing light levels.

It localises to the plastid. It is found in the chloroplast thylakoid membrane. In terms of biological role, one of the components of the core complex of photosystem II (PSII). It binds chlorophyll and helps catalyze the primary light-induced photochemical processes of PSII. PSII is a light-driven water:plastoquinone oxidoreductase, using light energy to abstract electrons from H(2)O, generating O(2) and a proton gradient subsequently used for ATP formation. The chain is Photosystem II CP43 reaction center protein from Secale cereale (Rye).